We begin with the raw amino-acid sequence, 116 residues long: Large ribosomal subunit protein bL17 (116 aa).

It belongs to the bacterial ribosomal protein bL17 family. In terms of assembly, part of the 50S ribosomal subunit. Contacts protein L32.

The chain is Large ribosomal subunit protein bL17 from Dictyoglomus turgidum (strain DSM 6724 / Z-1310).